The chain runs to 208 residues: V-type ATP synthase subunit D (208 aa).

Belongs to the V-ATPase D subunit family.

Functionally, produces ATP from ADP in the presence of a proton gradient across the membrane. This Streptococcus pyogenes serotype M3 (strain ATCC BAA-595 / MGAS315) protein is V-type ATP synthase subunit D.